The chain runs to 626 residues: Methanol dehydrogenase [cytochrome c] subunit 1 (626 aa).

Positions 1 to 27 (MSRFVTSVSALAMLALAPAALSSVAYA) are cleaved as a signal peptide. C130 and C131 are joined by a disulfide. Positions 204 and 288 each coordinate Ca(2+). D330 serves as the catalytic Proton acceptor. Residues C413 and C442 are joined by a disulfide bond.

This sequence belongs to the bacterial PQQ dehydrogenase family. Heterotetramer composed of 2 alpha and 2 beta subunits. It depends on pyrroloquinoline quinone as a cofactor. Ca(2+) is required as a cofactor.

The protein localises to the cell inner membrane. It catalyses the reaction 2 Fe(III)-[cytochrome cL] + a primary alcohol = 2 Fe(II)-[cytochrome cL] + an aldehyde + 2 H(+). Catalyzes the oxidation of primary alcohols including methanol. The polypeptide is Methanol dehydrogenase [cytochrome c] subunit 1 (moxF) (Methylobacterium organophilum).